Reading from the N-terminus, the 310-residue chain is Homoserine kinase (310 aa).

Position 91 to 101 (91 to 101) interacts with ATP; it reads PIGSGLGSSAC.

It belongs to the GHMP kinase family. Homoserine kinase subfamily.

It is found in the cytoplasm. It catalyses the reaction L-homoserine + ATP = O-phospho-L-homoserine + ADP + H(+). It participates in amino-acid biosynthesis; L-threonine biosynthesis; L-threonine from L-aspartate: step 4/5. In terms of biological role, catalyzes the ATP-dependent phosphorylation of L-homoserine to L-homoserine phosphate. This Escherichia coli O6:H1 (strain CFT073 / ATCC 700928 / UPEC) protein is Homoserine kinase.